The sequence spans 395 residues: Immunity-related GTPase family M protein 2 (395 aa).

Residues 63–239 enclose the IRG-type G domain; that stretch reads NKIKIAVTGD…PKLRETLQKD (177 aa). GTP-binding positions include 72–79, 97–101, and 179–181; these read DSGNGMSS, TGVVR, and KLD.

Belongs to the TRAFAC class dynamin-like GTPase superfamily. IRG family. Ubiquitinated; polyubiquitinated in the cytosol, promoting Gbp1 recruitment to the T.gondii parasitophorous vacuole membranes.

It is found in the cytoplasmic vesicle membrane. Its subcellular location is the golgi apparatus membrane. The protein localises to the cytoplasm. The protein resides in the cytosol. It carries out the reaction GTP + H2O = GDP + phosphate + H(+). Functionally, immunity-related GTPase that plays important roles in innate immunity and inflammatory response. Acts as a dynamin-like protein that binds to intracellular membranes and promotes remodeling and trafficking of those membranes. Required for clearance of acute protozoan and bacterial infections. Acts by participating to Tgtp1/Irgb6 and Gbp1-mediated parasite killing by promoting their accumulation on the T.gondii parasitophorous vacuole membranes. Also required for prolonged loading of ubiquitin and p62/Sqstm1 to parasitophorous vacuole membranes. Also acts as a key negative regulator of the inflammatory response by inhibiting the non-canonical inflammasome, thereby protecting against Casp11-driven septic shock during endotoxemia. The sequence is that of Immunity-related GTPase family M protein 2 from Mus musculus (Mouse).